A 2297-amino-acid polypeptide reads, in one-letter code: MAEVAKQKKATEAVCGDEDFPPPPPPLPRPQVLESLQKDLSQNFLPVPPPKETFSEIYQQRQKSELKRLFKHIHPELKMTVDDVVDDELIDAINPQAADAAYQGEVQSMRWIFENWTLDNIGDPHETKKLLCEENPQGGDVKGKSSLFEHSTFDSQHAAGAERAGVVRGDVRTATWLFETQPLDSISKSKIEDEEIVEVVLKEPVQKGDVTGARRLFETKPLDSLGRCCSVEDQHFLTLKSELQENKGDVKKTVKLFQADPCCALRDSNGKIHEIKSICREEIMSSDFKTARWLFETQPLDHINEGAHVQIIRGISLEEAQRGGVDKKKWMFETQPLDAIHEGVVEEQKFQGTAVEGFSGAADVHNKLQLFENQPLSSLKGDSEGDVLEKEAIVGGNVGSTLWLFETQPMDTLKDSYEVGRLQKVMVSSDEKGEVQDKRMQFEKSTAGKTAGDSGNKVQNDEKGDVKTFKSLFETLPLNVSEKAQSQIHDITSGDVKGHCSLFETTPLYAIKDCAGKFHEVTTVSREECIKGNVQNYKWMFETRPLDQFEEGSGKVELIKGITRQEDMTDDTRTAKWMFETQPLDCMSLNSRTDVDSTQKEFKKSNVKTCKWLFETKPMDMLYEKSEGKQDVEPVPKADVKSHTWLFETQPLDNIKDKENLGLKLCSTVQEDVKSDVNVKTVKHLFETEPLDRITDQADSGQNVRCVSQVDMQSGDVSRVKEIFESKSLGTESSKWSEEQKNEIQSGSVHKFTWLFENQPIGDINEKEERIVSCDVEAGDVGGKKFIFETLSLDKIKDKDELLEHPSMIIEKPLSSSVNVKSNTMLFESQPLYAIRDKDGQFHEVTTVMKEEVMRGDVRGARWMFETKPLDTIQADKEIYVIRAVTQEDVHKGDVKSARWKFETQPLDSFTPHEGPSVRVVEDIGNEKCVQQSRQLFETEQASQKKFVRMVSVTDVQQGDVRTSTWLFENQPIDTLKGEPDEQNNLTAVHREDNTKGDVKRCTWLFESQSLDKIKDNKPTEELVSSREEIPKADVKSTTWLFETTPLDKITVESVTDILYRLCHNSFIHSSGIIIQANDYKYVNMAKYQIMKDEGPKVLKEEVVEGNIRNLMLQLLFKPNIKPMVVLLKEDEQGKMHSTVLEIPFQQPGSATNPEAECKTQEAVKIIENLLVQQKEIKTGLVMQESEGGQPEMTVYSLHCESSLTESQTITRGDVKSTIGNLLATVHSQQTKQSCRMEEIERGNVNLYKSCIEKGDLKSLQRELSEEDLVTSCRDQIEIVQGDVKEAMRHLSQQREQVERTILDVVPGDVKNVKKVFSDVCTDLSIGNCVPREEIVRGDILSAKQQLGEAVKQQVMVQKEEIVSGDIKATLESLERAKQQSMQVEREVIKPGTIYDLNVEAEEMCSEENESKLVKEEIIPGDIKAAKRSLERAKNQSMKVEREPITPGKLYNLNETSQCQSSTTVEQSTTSTYSNHRITTTFRKVSDIEKDQESIKRLCCLNEVGGGGKNIYINTEDALRMVDISESVPDVVKGDVKATIQSLRSASTEQRSVDREEIVRGNMQETLQCLKKSSINISRGDYKAAMLYKQSGQPYTQSKITNDSGTKDCKQSFDHIPSSHTQLSSSVSVTRSEHPTSLALNSESVSSNADNSKNSSAFTGKDEHPPPILPKTGHQVKDQKPVIPPKPLHITTSSPPLFTETSNMCPNSTVSINDTQQTPAIPLKVTPSNKMFTHETEIAKTSNKIKDKESKIHEQVQRTNLTDPTDFQRMQYTEQWVQNSHMQITDTPSVNKTDSFKNGSFPGDSIGMEKNVVQRINAAEEIRMCYSKDNDELNKGFKAVLQNFGEKKTTTDTGSPFPKKIKVVQKENIQEQAKTSNKDELHFTSRDTSSTPNKHEVPSIHNNSENKVVLREKKAKRETEDERRQRLSIHRDEIMRGNVKAAMEIFENLMRREELKVILSKVQEIEGETFEVDVRSLKTLFENVPAWITNPKENTKRRHRPRVAKETEGLRDDLESISSVEAAFEDLEKASMDIVNLKEQTLAKLLDIEEAIKKALYSVSNLKSEADIAGLSGLFSESLSPDNVSPSTKNIRKISIVSSKTKPAQSNQMQSADNRALYKEVPHVPQVQVSKQSSNVPSSPSFISIHSAARKPAESPTDKPKTNADQSNAGSSSSQNSSASHICSPPSPRRKVSVLEVQRVPEVPSGIFGTKTVSEKYEETDCFGNTYYSSKRSTFVTRQSETELSSSYDVVTSPRRSEGMTSPVLQRSGQSFSSNSLSKGKDRKVFVTFGHPNTEKH.

Residues 1–11 show a composition bias toward basic and acidic residues; that stretch reads MAEVAKQKKAT. Residues 1-28 form a disordered region; sequence MAEVAKQKKATEAVCGDEDFPPPPPPLP. Xin repeat units follow at residues 104–119, 139–154, 169–184, 208–223, 248–263, 286–301, 323–338, 362–377, and 396–411; these read GEVQSMRWIFENWTLD, GDVKGKSSLFEHSTFD, GDVRTATWLFETQPLD, GDVTGARRLFETKPLD, GDVKKTVKLFQADPCC, SDFKTARWLFETQPLD, GGVDKKKWMFETQPLD, ADVHNKLQLFENQPLS, and GNVGSTLWLFETQPMD. The span at 433-442 shows a compositional bias: basic and acidic residues; that stretch reads GEVQDKRMQF. Residues 433–461 form a disordered region; it reads GEVQDKRMQFEKSTAGKTAGDSGNKVQND. Xin repeat units follow at residues 464 to 479, 494 to 509, 532 to 547, 570 to 585, 605 to 620, 638 to 653, 677 to 692, 715 to 730, 747 to 762, 779 to 794, 818 to 833, 856 to 871, 893 to 908, and 928 to 943; these read GDVKTFKSLFETLPLN, GDVKGHCSLFETTPLY, GNVQNYKWMFETRPLD, DDTRTAKWMFETQPLD, SNVKTCKWLFETKPMD, ADVKSHTWLFETQPLD, VNVKTVKHLFETEPLD, GDVSRVKEIFESKSLG, GSVHKFTWLFENQPIG, GDVGGKKFIFETLSLD, VNVKSNTMLFESQPLY, GDVRGARWMFETKPLD, GDVKSARWKFETQPLD, and KCVQQSRQLFETEQAS. Phosphoserine is present on Ser952. Xin repeat units lie at residues 959–974, 997–1012, and 1033–1048; these read GDVRTSTWLFENQPID, GDVKRCTWLFESQSLD, and ADVKSTTWLFETTPLD. 4 disordered regions span residues 1617–1680, 1866–1900, 2147–2191, and 2243–2297; these read PSSH…KDQK, KENIQEQAKTSNKDELHFTSRDTSSTPNKHEVPSI, SAAR…PRRK, and ELSS…TEKH. Low complexity-rich tracts occupy residues 1618–1630 and 1644–1656; these read SSHTQLSSSVSVT and SVSSNADNSKNSS. Composition is skewed to basic and acidic residues over residues 1876–1885 and 2151–2162; these read SNKDELHFTS and KPAESPTDKPKT. The span at 2166–2180 shows a compositional bias: low complexity; it reads QSNAGSSSSQNSSAS. The span at 2259 to 2278 shows a compositional bias: polar residues; the sequence is GMTSPVLQRSGQSFSSNSLS.

The protein belongs to the Xin family. In terms of tissue distribution, expressed at intercalated disks in the heart (at protein level).

The protein resides in the cell junction. It is found in the adherens junction. Its subcellular location is the desmosome. Positively regulates organization of the outer plexiform layer and Muller glia cells in the retina. May protect actin filaments from depolymerization. May play a role in development of normal skeletal muscle morphology and muscle fiber type composition. The sequence is that of Xin actin-binding repeat-containing protein 1 from Danio rerio (Zebrafish).